The following is a 503-amino-acid chain: Maturase K (503 aa).

Belongs to the intron maturase 2 family. MatK subfamily.

The protein localises to the plastid. It localises to the chloroplast. Functionally, usually encoded in the trnK tRNA gene intron. Probably assists in splicing its own and other chloroplast group II introns. The protein is Maturase K of Rosa carolina (Pasture rose).